The following is a 74-amino-acid chain: RNA-binding protein Hfq (74 aa).

In terms of domain architecture, Sm spans 9–69; the sequence is DQFLNQLRKE…ISTFAPQKNV (61 aa).

This sequence belongs to the Hfq family. In terms of assembly, homohexamer.

Its function is as follows. RNA chaperone that binds small regulatory RNA (sRNAs) and mRNAs to facilitate mRNA translational regulation in response to envelope stress, environmental stress and changes in metabolite concentrations. Also binds with high specificity to tRNAs. This chain is RNA-binding protein Hfq, found in Anoxybacillus flavithermus (strain DSM 21510 / WK1).